We begin with the raw amino-acid sequence, 147 residues long: uncharacterized protein (147 aa).

The next 2 helical transmembrane spans lie at 41 to 61 (LANF…ALLI) and 67 to 87 (LLAA…SFPL).

It is found in the cell membrane. This is an uncharacterized protein from Pyrococcus horikoshii (strain ATCC 700860 / DSM 12428 / JCM 9974 / NBRC 100139 / OT-3).